Reading from the N-terminus, the 950-residue chain is Translation initiation factor IF-2 (950 aa).

2 disordered regions span residues 69–92 and 128–352; these read KTKT…AGKA and KPKV…SNVP. Composition is skewed to basic and acidic residues over residues 77–86, 128–158, 165–186, 200–234, and 291–312; these read AKSKQEDHPR, KPKV…EAKA, AEVK…EKKK, KRAE…DNRR, and NRRD…DGNR. Polar residues-rich tracts occupy residues 322-336 and 343-352; these read NRNQ…NWNQ and YQNNQSSNVP. Positions 448–619 constitute a tr-type G domain; it reads ERPAVVTIMG…LLVAEVQELK (172 aa). Positions 457–464 are G1; sequence GHVDHGKT. 457–464 is a GTP binding site; that stretch reads GHVDHGKT. Residues 482 to 486 form a G2 region; sequence GITQH. Positions 503–506 are G3; it reads DTPG. Residues 503 to 507 and 557 to 560 contribute to the GTP site; these read DTPGH and NKID. The interval 557-560 is G4; that stretch reads NKID. The interval 595-597 is G5; the sequence is SAK.

The protein belongs to the TRAFAC class translation factor GTPase superfamily. Classic translation factor GTPase family. IF-2 subfamily.

The protein localises to the cytoplasm. In terms of biological role, one of the essential components for the initiation of protein synthesis. Protects formylmethionyl-tRNA from spontaneous hydrolysis and promotes its binding to the 30S ribosomal subunits. Also involved in the hydrolysis of GTP during the formation of the 70S ribosomal complex. The protein is Translation initiation factor IF-2 of Lactococcus lactis subsp. cremoris (strain SK11).